The following is a 624-amino-acid chain: ADP,ATP carrier protein 1, chloroplastic (624 aa).

The N-terminal 79 residues, 1-79, are a transit peptide targeting the chloroplast; that stretch reads MEAVIQTRGL…KERSTEFICK (79 aa). Ala-80 carries the N-acetylalanine modification. 6 consecutive transmembrane segments (helical) span residues 108–128, 182–202, 240–260, 315–335, 446–466, and 545–565; these read VEVA…CILF, ALFY…GFVM, LFYV…FWGF, AMMS…WWVN, LLTG…APLV, and LANS…AWLA. Residues 579 to 624 are disordered; it reads SEEELEKEMERASSVKIPVVSQDESGNGSLGESPSSSPEKSAPTNL. Low complexity predominate over residues 602 to 624; the sequence is ESGNGSLGESPSSSPEKSAPTNL.

It belongs to the ADP/ATP translocase tlc (TC 2.A.12.2) family.

The protein resides in the plastid. It localises to the chloroplast membrane. Its function is as follows. May function as an ATP importer. This chain is ADP,ATP carrier protein 1, chloroplastic (AATP1), found in Arabidopsis thaliana (Mouse-ear cress).